Here is an 83-residue protein sequence, read N- to C-terminus: MMNVSLKLSFLVFILVIMSNLGSEARELAGVNEIFEIAARSSNNAGTARALQQAPPCKRDVDCSFECPKGGFCNDRLGTCDCF.

The N-terminal stretch at Met1–Ala25 is a signal peptide. 3 disulfide bridges follow: Cys57/Cys73, Cys63/Cys80, and Cys67/Cys82.

Belongs to the DEFL family.

It localises to the secreted. The polypeptide is Putative defensin-like protein 257 (Arabidopsis thaliana (Mouse-ear cress)).